Reading from the N-terminus, the 216-residue chain is Imidazole glycerol phosphate synthase subunit HisH (216 aa).

The Glutamine amidotransferase type-1 domain maps to 2-216 (RVAIIDYGSG…FIANFLKWKP (215 aa)). Catalysis depends on Cys-88, which acts as the Nucleophile. Active-site residues include His-196 and Glu-198.

Heterodimer of HisH and HisF.

Its subcellular location is the cytoplasm. The catalysed reaction is 5-[(5-phospho-1-deoxy-D-ribulos-1-ylimino)methylamino]-1-(5-phospho-beta-D-ribosyl)imidazole-4-carboxamide + L-glutamine = D-erythro-1-(imidazol-4-yl)glycerol 3-phosphate + 5-amino-1-(5-phospho-beta-D-ribosyl)imidazole-4-carboxamide + L-glutamate + H(+). The enzyme catalyses L-glutamine + H2O = L-glutamate + NH4(+). It participates in amino-acid biosynthesis; L-histidine biosynthesis; L-histidine from 5-phospho-alpha-D-ribose 1-diphosphate: step 5/9. Its function is as follows. IGPS catalyzes the conversion of PRFAR and glutamine to IGP, AICAR and glutamate. The HisH subunit catalyzes the hydrolysis of glutamine to glutamate and ammonia as part of the synthesis of IGP and AICAR. The resulting ammonia molecule is channeled to the active site of HisF. In Brucella melitensis biotype 1 (strain ATCC 23456 / CCUG 17765 / NCTC 10094 / 16M), this protein is Imidazole glycerol phosphate synthase subunit HisH.